The sequence spans 313 residues: Porphobilinogen deaminase (313 aa).

Position 242 is an S-(dipyrrolylmethanemethyl)cysteine (Cys-242).

It belongs to the HMBS family. Monomer. Dipyrromethane is required as a cofactor.

The catalysed reaction is 4 porphobilinogen + H2O = hydroxymethylbilane + 4 NH4(+). The protein operates within porphyrin-containing compound metabolism; protoporphyrin-IX biosynthesis; coproporphyrinogen-III from 5-aminolevulinate: step 2/4. Tetrapolymerization of the monopyrrole PBG into the hydroxymethylbilane pre-uroporphyrinogen in several discrete steps. The polypeptide is Porphobilinogen deaminase (Marinobacter nauticus (strain ATCC 700491 / DSM 11845 / VT8) (Marinobacter aquaeolei)).